The chain runs to 537 residues: P2Y purinoceptor 4 (537 aa).

Residues 1-49 are Extracellular-facing; that stretch reads MTEDIMATSYPTFLTTPYLPMKLLMNLTNDTEDICVFDEGFKFLLLPVS. Asn26 and Asn29 each carry an N-linked (GlcNAc...) asparagine glycan. A helical membrane pass occupies residues 50–70; sequence YSAVFMVGLPLNIAAMWIFIA. Residues 71 to 79 lie on the Cytoplasmic side of the membrane; sequence KMRPWNPTT. The chain crosses the membrane as a helical span at residues 80–100; that stretch reads VYMFNLALSDTLYVLSLPTLV. Residues 101-118 lie on the Extracellular side of the membrane; the sequence is YYYADKNNWPFGEVLCKL. Cysteines 116 and 193 form a disulfide. A helical membrane pass occupies residues 119–139; that stretch reads VRFLFYANLYSSILFLTCISV. The Cytoplasmic portion of the chain corresponds to 140 to 161; sequence HRYRGVCHPITSLRRMNAKHAY. Residues 162–182 traverse the membrane as a helical segment; that stretch reads VICALVWLSVTLCLVPNLIFV. The Extracellular segment spans residues 183 to 210; that stretch reads TVSPKVKNTICHDTTRPEDFARYVEYST. Residues 211–231 traverse the membrane as a helical segment; that stretch reads AIMCLLFGIPCLIIAGCYGLM. Residues 232–254 lie on the Cytoplasmic side of the membrane; that stretch reads TRELMKPIVSGNQQTLPSYKKRS. A helical membrane pass occupies residues 255–275; that stretch reads IKTIIFVMIAFAICFMPFHIT. Residues 276-292 are Extracellular-facing; the sequence is RTLYYYARLLGIKCYAL. A helical membrane pass occupies residues 293–316; the sequence is NVINVTYKVTRPLASANSCIDPIL. The Cytoplasmic segment spans residues 317 to 537; it reads YFLANDRYRR…EKELQNFPKA (221 aa). Positions 401–505 are disordered; it reads NRRSTIKRNS…GEGTSTWNLL (105 aa). 2 stretches are compositionally biased toward basic and acidic residues: residues 409–423 and 431–447; these read NSTD…RHGE and VVEK…RKTT. A compositionally biased stretch (polar residues) spans 448 to 465; sequence EQSSKTNAEQDELQTQID.

Belongs to the G-protein coupled receptor 1 family.

It localises to the cell membrane. In terms of biological role, receptor for extracellular ATP, UTP, CTP, GTP and ITP. The activity of this receptor is mediated by G proteins which activate a phosphatidylinositol-calcium second messenger system. May play a key role in the early development of neural tissue. The polypeptide is P2Y purinoceptor 4 (p2ry4) (Xenopus laevis (African clawed frog)).